The following is a 152-amino-acid chain: Nucleoside diphosphate kinase (152 aa).

Positions 11, 59, 87, 93, 104, and 114 each coordinate ATP. Residue His117 is the Pros-phosphohistidine intermediate of the active site.

The protein belongs to the NDK family. In terms of assembly, homotetramer. The cofactor is Mg(2+).

It is found in the cytoplasm. It catalyses the reaction dZDP + ATP = dZTP + ADP. It carries out the reaction a 2'-deoxyribonucleoside 5'-diphosphate + ATP = a 2'-deoxyribonucleoside 5'-triphosphate + ADP. The enzyme catalyses a ribonucleoside 5'-diphosphate + ATP = a ribonucleoside 5'-triphosphate + ADP. The protein operates within purine metabolism. Its function is as follows. Major role in the synthesis of nucleoside triphosphates other than ATP. The ATP gamma phosphate is transferred to the NDP beta phosphate via a ping-pong mechanism, using a phosphorylated active-site intermediate. In terms of biological role, (Microbial infection) Catalyzes the phosphorylation of dZDP to dZTP, when the bacterium is infected by a phage that produces the substrate for the synthesis of dZTP (2- amino-2'-deoxyadenosine 5'-triphosphate), which is then used by the phage as a DNA polymerase substrate. This chain is Nucleoside diphosphate kinase, found in Synechococcus sp. (strain WH7803).